The following is a 216-amino-acid chain: DNA-binding protein HupB (216 aa).

A propeptide (removed; alternate) is located at residue glycine 2. At methionine 3 the chain carries N-acetylmethionine. A bacterial histone-like domain region spans residues 3 to 92 (MNKAELIDVL…PGAQFKAVVS (90 aa)). N6-acetyllysine is present on residues lysine 5, lysine 74, lysine 88, lysine 105, lysine 118, and lysine 135. Residues 102–216 (PAVKRGVGAS…KKATARRGRK (115 aa)) form a disordered region. The segment at 103–216 (AVKRGVGASA…KKATARRGRK (114 aa)) is degenerate repeats region. Low complexity predominate over residues 104-114 (VKRGVGASAAK). Over residues 115–216 (KVAKKAPAKK…KKATARRGRK (102 aa)) the composition is skewed to basic residues. The residue at position 140 (lysine 140) is an N6,N6,N6-trimethyllysine. N6-acetyllysine is present on residues lysine 148 and lysine 169.

This sequence belongs to the bacterial histone-like protein family. Long actinobacterial subfamily. As to quaternary structure, oligomerizes. Interacts with topoisomerase 1 (topA). Interacts with Eis. Interacts with antigen 85 proteins (fbpA, fbpB, fbpC). Probably acetylated by Eis in vivo. In vitro acetylated by Eis (strain H37Rv and H37Ra) on many more residues than those identified in vivo. Deacetylated in vitro by NAD-dependent protein deacylase (Rv1151c). In terms of processing, trimethylated on Lys-140 by human SUV39H1; trimethylation inhibits mycobacterial growth. SUV39H1 probably also trimethylates another residue. Post-translationally, probably succinylated by Rv0802c and desuccinylated by NAD-dependent protein deacylase (Rv1151c).

The protein localises to the cytoplasm. The protein resides in the nucleoid. It localises to the secreted. It is found in the cell wall. It carries out the reaction 4 Fe(2+) + O2 + 4 H(+) = 4 Fe(3+) + 2 H2O. Functionally, a nucleoid-associated protein (NAP) that probably plays a role in chromosome compactation. Binds DNA non-specifically, with greater affinity for supercoiled than linear DNA, binds well to nicked DNA, gapped and cruciform DNA. Has a preference for A:T rich DNA. Required for activation of the mtbB operon. Binds the mtbB promoter in the presence of iron, binding is seen with as little as 25 uM Fe(2+) and increases with increasing Fe(2+). RNase E and HupB jointly contribute to cellular adaptation to changing growth conditions and survival during antibiotic treatment and in the host. Plays a role in stress survival. Stimulates supercoiling relaxation by topoisomerase 1 (Top1, topA). Binds Fe(3+) but not Fe(2+). Has ferroxidase activity, converts Fe(2+) into Fe(3+) and in the presence of H(2)O(2) prevents the generation of hydroxyl radicals (the Fenton reaction). Protects DNA from damage in the presence of FeSO(4) and H(2)O(2). May function in iron storage. Involved in iron uptake by bacteria (either Fe(3+) or extracellular carboxymycobactin); antibodies against HupB block uptake of both. Following uptake iron is mostly found in the iron siderophores carboxymycobactin (CMb, extracellular) or mycobactin (Mb, lipophilic). Facilitates transfer of iron from CMb to Mb when liposomes plus a cell wall lysate are incubated with CMb. Binds iron, ferri-CMb and ferri-Mb; has 10-fold higher affinity for ferri-Mb. Suggested to transfer iron from CBm to Mb at the cell membrane. In terms of biological role, required for biofilm formation; trimethylation by recombinant human SUV39H1 (a histone methyltransferase) inhibits biofilm formation. Induces lymphoproliferation, particularly in health tuberculin reactors, and is immunogenic. Maybe involved in pathogenesis of inflammatory bowel disease (IBD) in patients with ulcerative colitis and Crohn disease (CD). Bound by anti-neutrophil cytoplasmic antibodies (pANCA), which are a hallmark of IBD. The binding is due to pANCA directed against H1-3 cross-reacting with DBH epitopes. In CD, target of a strong IgA response. Its function is as follows. May play a role in cell wall assembly. In vitro at low levels enhances formation of TMM and TDM by antigen 85 proteins (fbpA, fbpB, fbpC), at higher levels inhibits TMM and TDM formation. This is DNA-binding protein HupB from Mycobacterium tuberculosis (strain ATCC 25618 / H37Rv).